The following is a 671-amino-acid chain: MSELEEDFAKILMLKEERIKELEKRLSEKEEEIQELKRKLHKCQSVLPVPSTHIGPRTTRAQGISAEPQTYRSFHDLRQAFRKFTKSERSKDLIKEAILDNDFMKNLELSQIQEIVDCMYPVEYGKDSCIIKEGDVGSLVYVMEDGKVEVTKEGVKLCTMGPGKVFGELAILYNCTRTATVKTLVNVKLWAIDRQCFQTIMMRTGLIKHTEYMEFLKSVPTFQSLPEEILSKLADVLEETHYENGEYIIRQGARGDTFFIISKGKVNVTREDSPNEDPVFLRTLGKGDWFGEKALQGEDVRTANVIAAEAVTCLVIDRDSFKHLIGGLDDVSNKAYEDAEAKAKYEAEAAFFANLKLSDFNIIDTLGVGGFGRVELVQLKSEESKTFAMKILKKRHIVDTRQQEHIRSEKQIMQGAHSDFIVRLYRTFKDSKYLYMLMEACLGGELWTILRDRGSFEDSTTRFYTACVVEAFAYLHSKGIIYRDLKPENLILDHRGYAKLVDFGFAKKIGFGKKTWTFCGTPEYVAPEIILNKGHDISADYWSLGILMYELLTGSPPFSGPDPMKTYNIILRGIDMIEFPKKIAKNAANLIKKLCRDNPSERLGNLKNGVKDIQKHKWFEGFNWEGLRKGTLTPPIIPSVASPTDTSNFDSFPEDNDEPPPDDNSGWDIDF.

Ser2 is subject to N-acetylserine. Positions 2 to 59 (SELEEDFAKILMLKEERIKELEKRLSEKEEEIQELKRKLHKCQSVLPVPSTHIGPRTT) form a coiled coil. The interval 2-102 (SELEEDFAKI…LIKEAILDND (101 aa)) is required for dimerization. The tract at residues 9-44 (AKILMLKEERIKELEKRLSEKEEEIQELKRKLHKCQ) is leucine-zipper. The autoinhibitory domain stretch occupies residues 50 to 75 (PSTHIGPRTTRAQGISAEPQTYRSFH). Thr59 bears the Phosphothreonine; by autocatalysis mark. The interval 103–220 (FMKNLELSQI…EYMEFLKSVP (118 aa)) is cGMP-binding, high affinity. Residues 167–170 (GELA) and 177–178 (RT) contribute to the 3',5'-cyclic AMP site. Residues 167–170 (GELA), 177–178 (RT), Arg282, 291–294 (GEKA), 301–302 (RT), and Tyr336 contribute to the 3',5'-cyclic GMP site. The tract at residues 221–341 (TFQSLPEEIL…SNKAYEDAEA (121 aa)) is cGMP-binding, low affinity. The 260-residue stretch at 360-619 (FNIIDTLGVG…VKDIQKHKWF (260 aa)) folds into the Protein kinase domain. Residues 366–374 (LGVGGFGRV) and Lys390 contribute to the ATP site. The active-site Proton acceptor is Asp484. Thr515 is modified (phosphothreonine). The region spanning 620–671 (EGFNWEGLRKGTLTPPIIPSVASPTDTSNFDSFPEDNDEPPPDDNSGWDIDF) is the AGC-kinase C-terminal domain. Positions 635–671 (PIIPSVASPTDTSNFDSFPEDNDEPPPDDNSGWDIDF) are disordered. A compositionally biased stretch (acidic residues) spans 652–661 (FPEDNDEPPP).

Belongs to the protein kinase superfamily. AGC Ser/Thr protein kinase family. cGMP subfamily. As to quaternary structure, isoform alpha: parallel homodimer or heterodimer and also heterotetramer. Interacts directly with PPP1R12A. Non-covalent dimer of dimer of PRKG1-PRKG1 and PPP1R12A-PPP1R12A. This interaction targets PRKG1 to stress fibers to mediate smooth muscle cell relaxation and vasodilation in responses to rises in cGMP. Isoform beta: antiparallel homodimer. Part of cGMP kinase signaling complex at least composed of ACTA2/alpha-actin, CNN1/calponin H1, PLN/phospholamban, PRKG1 and ITPR1. Interacts with IRAG1. Forms a stable complex with ITPR1, IRAG1, and isoform beta of PRKG1. Interacts with TRPC7 (via ankyrin repeat domain). Isoform alpha interacts with RGS2. Interacts with GTF2I. Autophosphorylation increases kinase activity. Post-translationally, 65 kDa monomer is produced by proteolytic cleavage. In terms of tissue distribution, high concentrations are detected in various smooth muscle: lung, rumen, trachea, aorta, uterus and stomach. Isoform alpha is expressed predominantly in heart, cerebellum and lung, whereas the beta isoform is expressed in high concentrations in trachea, aorta, stomach and uterus.

It localises to the cytoplasm. The catalysed reaction is L-seryl-[protein] + ATP = O-phospho-L-seryl-[protein] + ADP + H(+). The enzyme catalyses L-threonyl-[protein] + ATP = O-phospho-L-threonyl-[protein] + ADP + H(+). Its activity is regulated as follows. In the absence of cGMP, PRKG1 activity is suppressed by autoinhibitory contacts. In terms of biological role, serine/threonine protein kinase that acts as a key mediator of the nitric oxide (NO)/cGMP signaling pathway. GMP binding activates PRKG1, which phosphorylates serines and threonines on many cellular proteins. Numerous protein targets for PRKG1 phosphorylation are implicated in modulating cellular calcium, but the contribution of each of these targets may vary substantially among cell types. Proteins that are phosphorylated by PRKG1 regulate platelet activation and adhesion, smooth muscle contraction, cardiac function, gene expression, feedback of the NO-signaling pathway, and other processes involved in several aspects of the CNS like axon guidance, hippocampal and cerebellar learning, circadian rhythm and nociception. Smooth muscle relaxation is mediated through lowering of intracellular free calcium, by desensitization of contractile proteins to calcium, and by decrease in the contractile state of smooth muscle or in platelet activation. Regulates intracellular calcium levels via several pathways: phosphorylates IRAG1 and inhibits IP3-induced Ca(2+) release from intracellular stores, phosphorylation of KCNMA1 (BKCa) channels decreases intracellular Ca(2+) levels, which leads to increased opening of this channel. PRKG1 phosphorylates the canonical transient receptor potential channel (TRPC) family which inactivates the associated inward calcium current. Another mode of action of NO/cGMP/PKGI signaling involves PKGI-mediated inactivation of the Ras homolog gene family member A (RhoA). Phosphorylation of RHOA by PRKG1 blocks the action of this protein in myriad processes: regulation of RHOA translocation; decreasing contraction; controlling vesicle trafficking, reduction of myosin light chain phosphorylation resulting in vasorelaxation. Activation of PRKG1 by NO signaling also alters gene expression in a number of tissues. In smooth muscle cells, increased cGMP and PRKG1 activity influence expression of smooth muscle-specific contractile proteins, levels of proteins in the NO/cGMP signaling pathway, down-regulation of the matrix proteins osteopontin and thrombospondin-1 to limit smooth muscle cell migration and phenotype. Regulates vasodilator-stimulated phosphoprotein (VASP) functions in platelets and smooth muscle. In Bos taurus (Bovine), this protein is cGMP-dependent protein kinase 1 (PRKG1).